We begin with the raw amino-acid sequence, 426 residues long: Serine--tRNA ligase (426 aa).

231–233 (TAE) lines the L-serine pocket. Residues 262-264 (RRE) and Val278 contribute to the ATP site. Glu285 lines the L-serine pocket. 349-352 (EVSS) lines the ATP pocket. Ser384 is a binding site for L-serine.

Belongs to the class-II aminoacyl-tRNA synthetase family. Type-1 seryl-tRNA synthetase subfamily. In terms of assembly, homodimer. The tRNA molecule binds across the dimer.

The protein resides in the cytoplasm. It catalyses the reaction tRNA(Ser) + L-serine + ATP = L-seryl-tRNA(Ser) + AMP + diphosphate + H(+). The enzyme catalyses tRNA(Sec) + L-serine + ATP = L-seryl-tRNA(Sec) + AMP + diphosphate + H(+). The protein operates within aminoacyl-tRNA biosynthesis; selenocysteinyl-tRNA(Sec) biosynthesis; L-seryl-tRNA(Sec) from L-serine and tRNA(Sec): step 1/1. Functionally, catalyzes the attachment of serine to tRNA(Ser). Is also able to aminoacylate tRNA(Sec) with serine, to form the misacylated tRNA L-seryl-tRNA(Sec), which will be further converted into selenocysteinyl-tRNA(Sec). The polypeptide is Serine--tRNA ligase (Chlamydia felis (strain Fe/C-56) (Chlamydophila felis)).